A 422-amino-acid chain; its full sequence is Glycine amidinotransferase, mitochondrial (422 aa).

A mitochondrion-targeting transit peptide spans 1 to 37 (MLRVRCVRGGSRGAEAVHYIGSMLRKGFVGWVQRSFQ). Active-site residues include Asp253 and His302. Cys406 serves as the catalytic Amidino-cysteine intermediate.

Belongs to the amidinotransferase family. In terms of assembly, homodimer.

Its subcellular location is the mitochondrion inner membrane. The catalysed reaction is L-arginine + glycine = guanidinoacetate + L-ornithine. Its pathway is amine and polyamine biosynthesis; creatine biosynthesis; creatine from L-arginine and glycine: step 1/2. Its function is as follows. Catalyzes the biosynthesis of guanidinoacetate, the immediate precursor of creatine. Creatine plays a vital role in energy metabolism in muscle tissues. May play a role in embryonic and central nervous system development. The polypeptide is Glycine amidinotransferase, mitochondrial (Xenopus tropicalis (Western clawed frog)).